A 784-amino-acid chain; its full sequence is Ubiquitin carboxyl-terminal hydrolase 1 (784 aa).

Disordered regions lie at residues 1 to 21 (MPGV…SKKN) and 34 to 56 (KRAL…RGSE). Polar residues predominate over residues 7-16 (SESNGLSRGS). Ser16 and Ser42 each carry phosphoserine. The segment covering 45 to 56 (NEEKTSEYRGSE) has biased composition (basic and acidic residues). A Phosphoserine modification is found at Ser67. The region spanning 81-784 (VGLNNLGNTC…TPYLLFYKKL (704 aa)) is the USP domain. The Nucleophile role is filled by Cys90. Composition is skewed to basic and acidic residues over residues 233–243 (VEEQSLQKEET) and 252–264 (DSMR…KEQL). Disordered regions lie at residues 233–342 (VEEQ…INWL) and 362–414 (TTNQ…KSGN). Ser474 carries the phosphoserine modification. Residue His592 is the Proton acceptor of the active site. A disordered region spans residues 684–725 (NPDKVVGTPFTDNRNSETNDTTNGTHESDRNKESSDQTGVNM). Residues 693–708 (FTDNRNSETNDTTNGT) show a composition bias toward polar residues. Positions 709–718 (HESDRNKESS) are enriched in basic and acidic residues. Position 767 is a phosphoserine (Ser767).

The protein belongs to the peptidase C19 family. Interacts with FANCD2 and PCNA. Interacts with WDR48. Interacts with ATAD5; the interaction regulates USP1-mediated PCNA deubiquitination. In terms of processing, autocatalytic cleavage of USP1 following UV irradiation inactivates it, leading to an increase in ubiquitinated PCNA, recruitment of POLH and translesion synthesis. Ubiquitinated by the CRL2(KLHDC2) complex following autocatalytic cleavage, leading to its degradation: the CRL2(KLHDC2) complex recognizes the diglycine (Gly-Gly) at the C-terminus.

Its subcellular location is the nucleus. The enzyme catalyses Thiol-dependent hydrolysis of ester, thioester, amide, peptide and isopeptide bonds formed by the C-terminal Gly of ubiquitin (a 76-residue protein attached to proteins as an intracellular targeting signal).. Negative regulator of DNA damage repair which specifically deubiquitinates monoubiquitinated FANCD2. Also involved in PCNA-mediated translesion synthesis (TLS) by deubiquitinating monoubiquitinated PCNA. Has almost no deubiquitinating activity by itself and requires the interaction with WDR48 to have a high activity. In Mus musculus (Mouse), this protein is Ubiquitin carboxyl-terminal hydrolase 1.